Consider the following 340-residue polypeptide: Homeobox protein DBX2 (340 aa).

The homeobox DNA-binding region spans Gly-185–Lys-244. The tract at residues Gln-283–Pro-313 is disordered.

The protein belongs to the H2.0 homeobox family.

The protein localises to the nucleus. The chain is Homeobox protein DBX2 (DBX2) from Bos taurus (Bovine).